The primary structure comprises 615 residues: Sodium-dependent neutral amino acid transporter B(0)AT3 (615 aa).

Topologically, residues 1–26 are cytoplasmic; that stretch reads MAQASGMDPLVDIEDERPKWDNKLQY. The chain crosses the membrane as a helical span at residues 27-47; the sequence is LLSCIGFAVGLGNIWRFPYLC. Residues 48–52 lie on the Extracellular side of the membrane; it reads HTHGG. A helical membrane pass occupies residues 53 to 73; sequence GAFLIPYFIALVFEGIPLFYI. The Cytoplasmic portion of the chain corresponds to 74-105; the sequence is ELAIGQRLRRGSIGVWKTISPYLGGVGLGCFS. The helical transmembrane segment at 106–126 threads the bilayer; that stretch reads VSFLVSLYYNTILLWVLWFFL. The Extracellular segment spans residues 127 to 177; sequence NSFQHPLPWSTCPLDLNRTGFVQECQSSGTVSYFWYRQTLNITSDISNTGT. Asn-143 and Asn-167 each carry an N-linked (GlcNAc...) asparagine glycan. A helical transmembrane segment spans residues 178-198; it reads IQWKLFLCLVACWTTVYLCVI. Residues 199-206 are Cytoplasmic-facing; the sequence is RGIESTGK. A helical transmembrane segment spans residues 207–227; that stretch reads VIYFTALFPYLVLTIFLIRGL. At 228–255 the chain is on the extracellular side; it reads TLPGATEGLTYLFTPNMKILQNSRVWLD. Residues 256–276 traverse the membrane as a helical segment; the sequence is AATQIFFSLSLAFGGHIAFAS. Residues 277-290 lie on the Cytoplasmic side of the membrane; sequence YNQPRNNCEKDAVT. Residues 291-311 form a helical membrane-spanning segment; that stretch reads IALVNSMTSLYASITIFSIMG. Over 312–397 the chain is Extracellular; it reads FKASNDYGRC…FTEAVLHMPG (86 aa). Asn-353 is a glycosylation site (N-linked (GlcNAc...) asparagine). The helical transmembrane segment at 398–418 threads the bilayer; sequence ASVWSVLFFGMLFTLGLSSMF. Residues 419–442 lie on the Cytoplasmic side of the membrane; sequence GNMEGVITPLFDMGILPKGVPKET. The chain crosses the membrane as a helical span at residues 443 to 463; sequence MTGVVCFICFLSAICFTLQSG. Residues 464–472 lie on the Extracellular side of the membrane; the sequence is SYWLEIFDS. A helical membrane pass occupies residues 473–493; it reads FAASLNLIIFAFMEVVGVIHV. Residues 494–520 lie on the Cytoplasmic side of the membrane; it reads YGIKRFCDDIEWMTGRRPSLYWQVTWR. Residues 521–541 traverse the membrane as a helical segment; sequence VVSPMLLFGIFLSYIVLLAQS. Over 542–571 the chain is Extracellular; sequence SPSYKAWNPQYEHFPSREEKLYPGWVQVTC. Residues 572–592 traverse the membrane as a helical segment; it reads VLLSFLPSLWVPGIALAQLLF. Residues 593–615 are Cytoplasmic-facing; that stretch reads QYRQRWKNTHLESALKPQESRGC.

Belongs to the sodium:neurotransmitter symporter (SNF) (TC 2.A.22) family. SLC6A18 subfamily. Interacts with CLTRN; this interaction regulates the trafficking of SLC6A18 to the cell membrane and its activity. As to expression, kidney-specific expression.

Its subcellular location is the apical cell membrane. The protein resides in the cell membrane. The catalysed reaction is L-alanine(out) + chloride(out) + 2 Na(+)(out) = L-alanine(in) + chloride(in) + 2 Na(+)(in). It carries out the reaction glycine(out) + chloride(out) + 2 Na(+)(out) = glycine(in) + chloride(in) + 2 Na(+)(in). It catalyses the reaction L-methionine(out) + chloride(out) + 2 Na(+)(out) = L-methionine(in) + chloride(in) + 2 Na(+)(in). The enzyme catalyses L-valine(out) + chloride(out) + 2 Na(+)(out) = L-valine(in) + chloride(in) + 2 Na(+)(in). The catalysed reaction is L-isoleucine(out) + chloride(out) + 2 Na(+)(out) = L-isoleucine(in) + chloride(in) + 2 Na(+)(in). It carries out the reaction L-serine(out) + chloride(out) + 2 Na(+)(out) = L-serine(in) + chloride(in) + 2 Na(+)(in). It catalyses the reaction L-leucine(out) + chloride(out) + 2 Na(+)(out) = L-leucine(in) + chloride(in) + 2 Na(+)(in). Its function is as follows. Symporter that transports one amino acid molecule together with two sodium and one chloride ions in kidneys and plays a role in the neutral amino acids reabsorption. Preferentially transports neutral amino acids such as L-glycine and L-alanine but also other neutral amino acids. Required CLTRN for cell surface expression and for its amino acid transporter activity. The transport mechanism is pH-independent. The chain is Sodium-dependent neutral amino acid transporter B(0)AT3 from Rattus norvegicus (Rat).